Reading from the N-terminus, the 684-residue chain is UvrABC system protein C (684 aa).

Residues 16–95 enclose the GIY-YIG domain; that stretch reads TDPGVYKFRD…IKRFDPRFNV (80 aa). Positions 208 to 243 constitute a UVR domain; sequence APVRKRVTQRMEEAAENLEFELAARLRDDLGAIDKL. Residues 332–352 show a composition bias toward basic and acidic residues; sequence EAAEDAKLERRGVDQESHAEP. Positions 332–357 are disordered; that stretch reads EAAEDAKLERRGVDQESHAEPRQGNA.

The protein belongs to the UvrC family. As to quaternary structure, interacts with UvrB in an incision complex.

Its subcellular location is the cytoplasm. Functionally, the UvrABC repair system catalyzes the recognition and processing of DNA lesions. UvrC both incises the 5' and 3' sides of the lesion. The N-terminal half is responsible for the 3' incision and the C-terminal half is responsible for the 5' incision. This chain is UvrABC system protein C, found in Corynebacterium aurimucosum (strain ATCC 700975 / DSM 44827 / CIP 107346 / CN-1) (Corynebacterium nigricans).